The primary structure comprises 805 residues: Ribosome biogenesis protein ERB1 (805 aa).

Residues 1–105 (MVKGRKSQKA…SDFSEDDTKS (105 aa)) form a disordered region. A compositionally biased stretch (basic and acidic residues) spans 8–22 (QKADKVTKAKKRVAD). Residues 23–75 (EVDESESEPELQVEGLIDAEAESEDDESFESAEENASAEEDEEDEEDEEDSDA) show a composition bias toward acidic residues. The tract at residues 264–382 (RFVPSKNEAK…LRKVPGYTES (119 aa)) is required for interaction with NOP7. The required for interaction with YTM1 stretch occupies residues 382 to 418 (SVRERFERSLDLYLAPRMRKNKLNIDPESLIPELPSP). 7 WD repeats span residues 434 to 473 (GHEG…EVYR), 482 to 522 (NPED…YDIE), 590 to 632 (VCKK…TQSP), 635 to 673 (KSKG…LVKK), 676 to 715 (PGAR…TPYK), 719 to 758 (YHDK…DMMK), and 775 to 805 (GHLG…MWTT).

Belongs to the WD repeat BOP1/ERB1 family. As to quaternary structure, component of the NOP7 complex, composed of ERB1, NOP7 and YTM1. The complex is held together by ERB1, which interacts with NOP7 via its N-terminal domain and with YTM1 via a high-affinity interaction between the seven-bladed beta-propeller domains of the 2 proteins. The NOP7 complex associates with the 66S pre-ribosome.

The protein resides in the nucleus. Its subcellular location is the nucleolus. It localises to the nucleoplasm. Functionally, component of the NOP7 complex, which is required for maturation of the 25S and 5.8S ribosomal RNAs and formation of the 60S ribosome. In Candida glabrata (strain ATCC 2001 / BCRC 20586 / JCM 3761 / NBRC 0622 / NRRL Y-65 / CBS 138) (Yeast), this protein is Ribosome biogenesis protein ERB1.